The following is a 597-amino-acid chain: Pentatricopeptide repeat-containing protein At2g21090 (597 aa).

PPR repeat units follow at residues 45–79 (PFDL…GFKR), 81–111 (NTLL…MHLR), 112–142 (NLYS…MPER), 143–177 (DVVS…GIKF), 178–212 (NEFS…GFLS), 213–243 (NVVL…MTVK), 244–274 (DIHI…MPEK), 275–309 (NPVS…GVKP), 310–344 (EQFT…NVRP), 345–375 (NAIV…CDDK), 377–411 (DCVF…RVQP), 412–447 (NRTT…GIVP), and 448–478 (DQEH…MPFE). Positions 483 to 558 (IWNAILGVCR…EKAVSWIEIE (76 aa)) are type E motif. The type E(+) motif stretch occupies residues 559–591 (KKVEAFTVSDGSHAHARKEEIYFILHNLAAVIE).

This sequence belongs to the PPR family. PCMP-E subfamily.

In Arabidopsis thaliana (Mouse-ear cress), this protein is Pentatricopeptide repeat-containing protein At2g21090 (PCMP-E48).